Consider the following 390-residue polypeptide: Magnesium-protoporphyrin IX monomethyl ester [oxidative] cyclase (390 aa).

Belongs to the AcsF family. It depends on Fe cation as a cofactor.

The catalysed reaction is Mg-protoporphyrin IX 13-monomethyl ester + 3 NADPH + 3 O2 + 2 H(+) = 3,8-divinyl protochlorophyllide a + 3 NADP(+) + 5 H2O. It functions in the pathway porphyrin-containing compound metabolism; chlorophyll biosynthesis (light-independent). Its function is as follows. Catalyzes the formation of the isocyclic ring in chlorophyll biosynthesis. Mediates the cyclase reaction, which results in the formation of divinylprotochlorophyllide (Pchlide) characteristic of all chlorophylls from magnesium-protoporphyrin IX 13-monomethyl ester (MgPMME). This chain is Magnesium-protoporphyrin IX monomethyl ester [oxidative] cyclase, found in Prochlorococcus marinus (strain MIT 9215).